Consider the following 420-residue polypeptide: MKIHLDKSLPGGNIAVPSSKSYTIRGLIAAAQANGQSHIISPLIADDTLATRQVLSGLGININTDTGSESWEITGNTFKAPSGNLFCRESAATLRFMSAVCARLPFECHLLAGHSLMRRPMLPLIQALHQLGIEIETRGNTTVINGQVITRSKVSLPGNISSQYVSALMLMAPACTHGLEIHLATPPASLPYLKMTKQTLGSFGIKVHSSIDWQEISIPPQPYLPARYRVEGDWSSASSFLALGAIAAPVFISNLDTDSFQADRIMIKFLAEMGAEIESGQNWVKVNPKPLSGINADLTHSIDLLPALAVAAACAKGQSILSGVRQARIKESNRIRAVSQGLSAMGINIIEEDDRLIIEGGQPKGAEIDSFGDHRIAMAFGILGSVVGETHISDAECVTKTYPDFWKNLESLGGKVTQDV.

Lys20, Ser21, and Arg25 together coordinate 3-phosphoshikimate. Residue Lys20 participates in phosphoenolpyruvate binding. Arg119 contributes to the phosphoenolpyruvate binding site. Residues Ser161, Ser162, Gln163, Ser189, Asp303, Gln326, and Lys330 each coordinate 3-phosphoshikimate. Phosphoenolpyruvate is bound at residue Gln163. Asp303 (proton acceptor) is an active-site residue. Residues Arg334, Arg375, and Lys400 each coordinate phosphoenolpyruvate.

The protein belongs to the EPSP synthase family. As to quaternary structure, monomer.

The protein localises to the cytoplasm. The enzyme catalyses 3-phosphoshikimate + phosphoenolpyruvate = 5-O-(1-carboxyvinyl)-3-phosphoshikimate + phosphate. It functions in the pathway metabolic intermediate biosynthesis; chorismate biosynthesis; chorismate from D-erythrose 4-phosphate and phosphoenolpyruvate: step 6/7. In terms of biological role, catalyzes the transfer of the enolpyruvyl moiety of phosphoenolpyruvate (PEP) to the 5-hydroxyl of shikimate-3-phosphate (S3P) to produce enolpyruvyl shikimate-3-phosphate and inorganic phosphate. In Dehalococcoides mccartyi (strain ATCC BAA-2100 / JCM 16839 / KCTC 5957 / BAV1), this protein is 3-phosphoshikimate 1-carboxyvinyltransferase.